The following is a 159-amino-acid chain: 18.0 kDa class I heat shock protein (159 aa).

Positions 45-159 (ETAAFANTHI…PEVKSIHISG (115 aa)) constitute a sHSP domain.

The protein belongs to the small heat shock protein (HSP20) family. As to quaternary structure, forms oligomeric structures.

The protein resides in the cytoplasm. This chain is 18.0 kDa class I heat shock protein, found in Daucus carota (Wild carrot).